The following is a 324-amino-acid chain: MSKNERRTFLLDFEKPLWELEARINQIRELAEENNVDVSEQIAQLERRAEELRQEIFSTLTPSQRLQLARHPRRPSTLDYIQAIADEWFELHGDRGGYDDPALVGGVARLGGRPVTILGEQKGRDTKDNVARNFGMASPGGYRKAMRLMERANQFNQPIITFIDTPGAWAGVEAEKLGQGEAIAYNLREMFRLDVPIICTVIGEGGSGGALGIGVGDRLLMLEHAVYMVATPEACAAILWKDAKKSPQAAMALKITSSDLKELGIIDEIVPEPSGAAHSKPLEAANLLKQTLIDTIDELSSLSPEQRRKLRYQKYRQIGVFFES.

The CoA carboxyltransferase C-terminal domain maps to 44 to 298 (QLERRAEELR…KQTLIDTIDE (255 aa)).

The protein belongs to the AccA family. Acetyl-CoA carboxylase is a heterohexamer composed of biotin carboxyl carrier protein (AccB), biotin carboxylase (AccC) and two subunits each of ACCase subunit alpha (AccA) and ACCase subunit beta (AccD).

Its subcellular location is the cytoplasm. It carries out the reaction N(6)-carboxybiotinyl-L-lysyl-[protein] + acetyl-CoA = N(6)-biotinyl-L-lysyl-[protein] + malonyl-CoA. It participates in lipid metabolism; malonyl-CoA biosynthesis; malonyl-CoA from acetyl-CoA: step 1/1. Component of the acetyl coenzyme A carboxylase (ACC) complex. First, biotin carboxylase catalyzes the carboxylation of biotin on its carrier protein (BCCP) and then the CO(2) group is transferred by the carboxyltransferase to acetyl-CoA to form malonyl-CoA. The protein is Acetyl-coenzyme A carboxylase carboxyl transferase subunit alpha of Rippkaea orientalis (strain PCC 8801 / RF-1) (Cyanothece sp. (strain PCC 8801)).